The sequence spans 328 residues: D-cysteine desulfhydrase (328 aa).

Lys-51 carries the post-translational modification N6-(pyridoxal phosphate)lysine.

This sequence belongs to the ACC deaminase/D-cysteine desulfhydrase family. In terms of assembly, homodimer. It depends on pyridoxal 5'-phosphate as a cofactor.

The catalysed reaction is D-cysteine + H2O = hydrogen sulfide + pyruvate + NH4(+) + H(+). Catalyzes the alpha,beta-elimination reaction of D-cysteine and of several D-cysteine derivatives. It could be a defense mechanism against D-cysteine. The polypeptide is D-cysteine desulfhydrase (Klebsiella pneumoniae (strain 342)).